A 909-amino-acid chain; its full sequence is GTPase activating protein homolog 4 (909 aa).

The region spanning 1–257 (MASLIGSAKL…PTPDFQFESC (257 aa)) is the F-BAR domain. A Rho-GAP domain is found at 322–513 (IPIEEIMFKQ…LIIEGYLKLS (192 aa)). A disordered region spans residues 529-909 (IPSFSNNNNN…QRVPPPPSQS (381 aa)). Composition is skewed to low complexity over residues 533 to 562 (SNNNNNSTTTTTTTTTTTVPSSTSTNITTN) and 571 to 602 (SSTTPLPSLTTFSQSQSSSPPNQPSPSITPQQ). Residues 609–625 (SYQPPQPPPTMAPPPLF) show a composition bias toward pro residues. Over residues 651 to 674 (QYTQSSSNLPPIQLGVTNSPSKPQ) the composition is skewed to polar residues. Residues 672 to 809 (KPQLSDKQKE…QQLQQQSNGS (138 aa)) adopt a coiled-coil conformation. Residues 675–716 (LSDKQKEKEKEKEKEKEKEKEREKEKEKEKEKEKEKEKEKEK) show a composition bias toward basic and acidic residues. The span at 723–741 (SSSTSPNSSSLSISNFLSS) shows a compositional bias: low complexity. Residues 742-765 (NKDKDKEKDKEKEKEKEKEKDKEI) show a composition bias toward basic and acidic residues. Over residues 767–785 (ATNSTPEKPVSNRMSLIFS) the composition is skewed to polar residues. Composition is skewed to low complexity over residues 786–828 (QQLQ…MSPS) and 843–892 (SGTS…ELKS).

It localises to the cytoplasm. The protein resides in the contractile vacuole. Functionally, rho GTPase-activating protein involved in the signal transduction pathway. This chain is GTPase activating protein homolog 4 (mgp4), found in Dictyostelium discoideum (Social amoeba).